The primary structure comprises 288 residues: Anthranilate synthase beta subunit 1, chloroplastic (288 aa).

Residues 1 to 58 constitute a chloroplast transit peptide; sequence MACSHLAAAAAAASPAAARSPAASSAATASAFARLSATPRVASGGLAVRGQRGVAAVV. The 200-residue stretch at 83 to 282 folds into the Glutamine amidotransferase type-1 domain; the sequence is PIIVIDNYDS…VRFIEELEKQ (200 aa). An L-glutamine-binding site is contributed by 134–136; sequence GPG. The active-site Nucleophile is Cys-161. L-glutamine contacts are provided by residues Gln-165 and 215–216; that span reads SL. Catalysis depends on residues His-256 and Glu-258.

Heterotetramer consisting of two non-identical subunits: a beta subunit and a large alpha subunit. In terms of tissue distribution, expressed in roots and leaves.

The protein resides in the plastid. Its subcellular location is the chloroplast. The catalysed reaction is chorismate + L-glutamine = anthranilate + pyruvate + L-glutamate + H(+). The protein operates within amino-acid biosynthesis; L-tryptophan biosynthesis; L-tryptophan from chorismate: step 1/5. In terms of biological role, part of a heterotetrameric complex that catalyzes the two-step biosynthesis of anthranilate, an intermediate in the biosynthesis of L-tryptophan. In the first step, the glutamine-binding beta subunit of anthranilate synthase (AS) provides the glutamine amidotransferase activity which generates ammonia as a substrate that, along with chorismate, is used in the second step, catalyzed by the large alpha subunit of AS to produce anthranilate. The chain is Anthranilate synthase beta subunit 1, chloroplastic from Oryza sativa subsp. japonica (Rice).